The chain runs to 511 residues: Lysine--tRNA ligase (511 aa).

Mg(2+) is bound by residues Glu-421 and Glu-428.

This sequence belongs to the class-II aminoacyl-tRNA synthetase family. As to quaternary structure, homodimer. It depends on Mg(2+) as a cofactor.

Its subcellular location is the cytoplasm. It carries out the reaction tRNA(Lys) + L-lysine + ATP = L-lysyl-tRNA(Lys) + AMP + diphosphate. In Aeromonas hydrophila subsp. hydrophila (strain ATCC 7966 / DSM 30187 / BCRC 13018 / CCUG 14551 / JCM 1027 / KCTC 2358 / NCIMB 9240 / NCTC 8049), this protein is Lysine--tRNA ligase.